The chain runs to 215 residues: Ribonuclease T (215 aa).

The Exonuclease domain occupies Val20–Phe194. Asp23, Glu25, His181, and Asp186 together coordinate Mg(2+). His181 serves as the catalytic Proton donor/acceptor.

This sequence belongs to the RNase T family. As to quaternary structure, homodimer. Requires Mg(2+) as cofactor.

Trims short 3' overhangs of a variety of RNA species, leaving a one or two nucleotide 3' overhang. Responsible for the end-turnover of tRNA: specifically removes the terminal AMP residue from uncharged tRNA (tRNA-C-C-A). Also appears to be involved in tRNA biosynthesis. The polypeptide is Ribonuclease T (Citrobacter koseri (strain ATCC BAA-895 / CDC 4225-83 / SGSC4696)).